The chain runs to 279 residues: Undecaprenyl-diphosphatase (279 aa).

8 helical membrane passes run L2–L22, A44–I64, W85–L105, F113–I133, V163–L183, T188–L208, A223–I243, and F255–F275.

This sequence belongs to the UppP family.

It is found in the cell membrane. It catalyses the reaction di-trans,octa-cis-undecaprenyl diphosphate + H2O = di-trans,octa-cis-undecaprenyl phosphate + phosphate + H(+). In terms of biological role, catalyzes the dephosphorylation of undecaprenyl diphosphate (UPP). Confers resistance to bacitracin. The chain is Undecaprenyl-diphosphatase from Streptococcus pyogenes serotype M12 (strain MGAS2096).